Consider the following 142-residue polypeptide: Transcriptional regulator MraZ (142 aa).

SpoVT-AbrB domains follow at residues 5–47 and 76–119; these read THTP…PAPE and AHDE…DRVA.

The protein belongs to the MraZ family. Forms oligomers.

The protein localises to the cytoplasm. Its subcellular location is the nucleoid. The protein is Transcriptional regulator MraZ of Salinispora arenicola (strain CNS-205).